The following is a 414-amino-acid chain: 3-phosphoshikimate 1-carboxyvinyltransferase (414 aa).

3 residues coordinate 3-phosphoshikimate: Lys-20, Ser-21, and Arg-25. Lys-20 provides a ligand contact to phosphoenolpyruvate. Phosphoenolpyruvate is bound by residues Gly-85 and Arg-113. 3-phosphoshikimate is bound by residues Ser-154, Ser-155, Gln-156, Ser-181, Asp-296, and Lys-323. A phosphoenolpyruvate-binding site is contributed by Gln-156. The active-site Proton acceptor is the Asp-296. Phosphoenolpyruvate is bound by residues Arg-327, Arg-371, and Lys-395.

The protein belongs to the EPSP synthase family. Monomer.

The protein localises to the cytoplasm. The catalysed reaction is 3-phosphoshikimate + phosphoenolpyruvate = 5-O-(1-carboxyvinyl)-3-phosphoshikimate + phosphate. The protein operates within metabolic intermediate biosynthesis; chorismate biosynthesis. Functionally, catalyzes the transfer of the enolpyruvyl moiety of phosphoenolpyruvate (PEP) to the 5-hydroxyl of shikimate-3-phosphate (S3P) to produce enolpyruvyl shikimate-3-phosphate and inorganic phosphate. The polypeptide is 3-phosphoshikimate 1-carboxyvinyltransferase (Saccharolobus islandicus (strain M.14.25 / Kamchatka #1) (Sulfolobus islandicus)).